The chain runs to 375 residues: MRLNELTLQHYRNYETVSLDFPKTLNLFLGENAQGKTNLLESIYVLAMTRSHRTSNEKELIGWEQAAAKISGVVEKKTGTVPLEILISNKGRKTKVNHIEQKRLSAYIGQLNVILFAPEDLSLVKGSPQVRRKFIDMELGQVSPIYLYDLVQYQSVLKQRNQYLKQLAEKKQTDTVYLDILTEQLAEFGGKVLYARLGFLKKLEHWANLLHQKISHGRETLTIDYASSIPIDNTDLSLEALQNQLLQQLMNNRKRELFKANTFLGPHRDDLLFIVNGQNVQTYGSQGQQRTTALSIKLAEIDLMHSETGEYPVLLLDDVMSELDNERQIHLLETIEGKVQTFLTTTSLDHIKDKLTVEPDIFYVQQGKIERNSAT.

ATP is bound at residue 30 to 37 (GENAQGKT).

Belongs to the RecF family.

The protein resides in the cytoplasm. Functionally, the RecF protein is involved in DNA metabolism; it is required for DNA replication and normal SOS inducibility. RecF binds preferentially to single-stranded, linear DNA. It also seems to bind ATP. In Enterococcus faecalis (strain ATCC 700802 / V583), this protein is DNA replication and repair protein RecF.